Here is a 299-residue protein sequence, read N- to C-terminus: Nicotinate-nucleotide pyrophosphorylase [carboxylating] (299 aa).

The tract at residues Phe8–Pro12 is important for hexamer formation. Quinolinate contacts are provided by residues Arg102, Arg138–Lys139, His160–Arg161, Lys171, Glu201, Asp222, Ser248–Gly250, and Gly270.

This sequence belongs to the NadC/ModD family. Hexamer formed by 3 homodimers.

It carries out the reaction nicotinate beta-D-ribonucleotide + CO2 + diphosphate = quinolinate + 5-phospho-alpha-D-ribose 1-diphosphate + 2 H(+). The protein operates within cofactor biosynthesis; NAD(+) biosynthesis; nicotinate D-ribonucleotide from quinolinate: step 1/1. Involved in the catabolism of quinolinic acid (QA). The sequence is that of Nicotinate-nucleotide pyrophosphorylase [carboxylating] (Qprt) from Rattus norvegicus (Rat).